We begin with the raw amino-acid sequence, 318 residues long: Myoblast determination protein 1 (318 aa).

M1 is covalently cross-linked (Peptide (Met-Gly) (interchain with G-Cter in ubiquitin)). An N6-methyllysine; by EHMT2 modification is found at K104. Positions 109–160 (DRRKAATMRERRRLSKVNEAFETLKRCTSSNPNQRLPKVEILRNAIRYIEGL) constitute a bHLH domain. Disordered regions lie at residues 175–225 (AAFY…QNGY) and 265–318 (APAL…YQVL). Residues 196–206 (SDASSPRSNCS) are compositionally biased toward polar residues. The span at 265–274 (APALLLADAP) shows a compositional bias: low complexity. 2 stretches are compositionally biased toward polar residues: residues 287 to 298 (LSDTEQGTQTPS) and 307 to 318 (AGSNPNAIYQVL).

In terms of assembly, interacts with SUV39H1. Efficient DNA binding requires dimerization with another bHLH protein. Seems to form active heterodimers with ITF-2. Interacts with DDX5. Interacts with CHD2. Interacts with TSC22D3 isoform 1 and isoform 4. Interacts with SETD3. Interacts with P-TEFB complex; promotes the transcriptional activity of MYOD1 through its CDK9-mediated phosphorylation. Interacts with CSRP3. Interacts with NUPR1. Post-translationally, acetylated by a complex containing EP300 and PCAF. The acetylation is essential to activate target genes. Conversely, its deacetylation by SIRT1 inhibits its function. In terms of processing, ubiquitinated on the N-terminus; which is required for proteasomal degradation. Phosphorylated by CDK9. This phosphorylation promotes its function in muscle differentiation. Post-translationally, methylation at Lys-104 by EHMT2/G9a inhibits myogenic activity.

It localises to the nucleus. In terms of biological role, acts as a transcriptional activator that promotes transcription of muscle-specific target genes and plays a role in muscle differentiation. Together with MYF5 and MYOG, co-occupies muscle-specific gene promoter core region during myogenesis. Induces fibroblasts to differentiate into myoblasts. Interacts with and is inhibited by the twist protein. This interaction probably involves the basic domains of both proteins. The chain is Myoblast determination protein 1 (Myod1) from Mus musculus (Mouse).